Consider the following 746-residue polypeptide: Exostosin-1 (746 aa).

Topologically, residues 1–7 are cytoplasmic; sequence MQAKKRY. The helical; Signal-anchor for type II membrane protein transmembrane segment at 8–28 threads the bilayer; sequence FILLSAGSCLALLFYFGGLQF. Residues 29–746 lie on the Lumenal side of the membrane; the sequence is RASRSHSRRE…RKKYRDIERL (718 aa). Asparagine 89 is a glycosylation site (N-linked (GlcNAc...) asparagine). Cystine bridges form between cysteine 98/cysteine 103 and cysteine 109/cysteine 152. The a protein site is built by leucine 166 and tyrosine 203. Positions 267, 269, 271, and 280 each coordinate UDP. A disulfide bond links cysteine 298 and cysteine 312. Residue histidine 300 participates in a protein binding. 2 residues coordinate UDP: tyrosine 319 and tyrosine 324. An N-linked (GlcNAc...) asparagine glycan is attached at asparagine 330. Cystine bridges form between cysteine 334-cysteine 355 and cysteine 652-cysteine 704. UDP is bound by residues arginine 346 and glutamate 349.

It belongs to the glycosyltransferase 47 family. In terms of assembly, part of the heparan sulfate polymerase, a dimeric complex composed of EXT1 and EXT2. Could also form homooligomeric complexes. Interacts with NDST1. Post-translationally, N-glycosylated.

Its subcellular location is the golgi apparatus membrane. It localises to the golgi apparatus. The protein resides in the cis-Golgi network membrane. It is found in the endoplasmic reticulum membrane. The enzyme catalyses 3-O-{alpha-D-GlcNAc-[(1-&gt;4)-beta-D-GlcA-(1-&gt;4)-alpha-D-GlcNAc](n)-(1-&gt;4)-beta-D-GlcA-(1-&gt;3)-beta-D-Gal-(1-&gt;3)-beta-D-Gal-(1-&gt;4)-beta-D-Xyl}-L-seryl-[protein] + UDP-alpha-D-glucuronate = 3-O-{[(1-&gt;4)-beta-D-GlcA-(1-&gt;4)-alpha-D-GlcNAc](n+1)-(1-&gt;4)-beta-D-GlcA-(1-&gt;3)-beta-D-Gal-(1-&gt;3)-beta-D-Gal-(1-&gt;4)-beta-D-Xyl}-L-seryl-[protein] + UDP + H(+). It participates in protein modification; protein glycosylation. In terms of biological role, glycosyltransferase forming with EXT2 the heterodimeric heparan sulfate polymerase which catalyzes the elongation of the heparan sulfate glycan backbone. Glycan backbone extension consists in the alternating transfer of (1-&gt;4)-beta-D-GlcA and (1-&gt;4)-alpha-D-GlcNAc residues from their respective UDP-sugar donors. Both EXT1 and EXT2 are required for the full activity of the polymerase since EXT1 bears the N-acetylglucosaminyl-proteoglycan 4-beta-glucuronosyltransferase activity within the complex while EXT2 carries the glucuronosyl-N-acetylglucosaminyl-proteoglycan 4-alpha-N-acetylglucosaminyltransferase activity. Heparan sulfate proteoglycans are ubiquitous components of the extracellular matrix and play an important role in tissue homeostasis and signaling. The protein is Exostosin-1 (EXT1) of Papio anubis (Olive baboon).